The primary structure comprises 694 residues: Elongation factor G (694 aa).

Residues 8-287 (EDYRNFGIMA…AVISYLPSPV (280 aa)) enclose the tr-type G domain. Residues 17–24 (AHIDAGKT), 86–90 (DTPGH), and 140–143 (NKMD) each bind GTP.

The protein belongs to the TRAFAC class translation factor GTPase superfamily. Classic translation factor GTPase family. EF-G/EF-2 subfamily.

It localises to the cytoplasm. In terms of biological role, catalyzes the GTP-dependent ribosomal translocation step during translation elongation. During this step, the ribosome changes from the pre-translocational (PRE) to the post-translocational (POST) state as the newly formed A-site-bound peptidyl-tRNA and P-site-bound deacylated tRNA move to the P and E sites, respectively. Catalyzes the coordinated movement of the two tRNA molecules, the mRNA and conformational changes in the ribosome. The protein is Elongation factor G of Bartonella quintana (strain Toulouse) (Rochalimaea quintana).